A 452-amino-acid chain; its full sequence is Keratin, type I cytoskeletal 15 (452 aa).

Residues M1 to N97 are head. Phosphoserine occurs at positions 15, 16, 28, 33, and 47. Positions E98 to W133 are coil 1A. The IF rod domain maps to E98 to M410. Position 124 is a phosphothreonine (T124). The interval Y134–T152 is linker 1. A coil 1B region spans residues M153–F244. A linker 12 region spans residues S245 to L264. The coil 2 stretch occupies residues T265–Q406. K293 participates in a covalent cross-link: Glycyl lysine isopeptide (Lys-Gly) (interchain with G-Cter in SUMO2). T294 and T316 each carry phosphothreonine. The interval D407–I452 is tail. Residues I413–I452 form a disordered region. Residue K443 forms a Glycyl lysine isopeptide (Lys-Gly) (interchain with G-Cter in SUMO1); alternate linkage. A Glycyl lysine isopeptide (Lys-Gly) (interchain with G-Cter in SUMO2); alternate cross-link involves residue K443.

Belongs to the intermediate filament family. In terms of assembly, heterotetramer of two type I and two type II keratins. Forms a heterodimer with KRT14. Interacts with PLEC isoform 1C, when in a heterodimer with KRT14. Interacts with NOD2. As to expression, expressed strongly in the basal cell layer at the tips of rete-like prominences (RLPs) of adult dorsal tongue, outer root sheath (ORS) of hair follicle and skin epidermis (at protein level).

Functionally, in the absence of KRT14, makes a bona fide, but ultrastructurally distinct keratin filament network with KRT5. The chain is Keratin, type I cytoskeletal 15 (Krt15) from Mus musculus (Mouse).